A 120-amino-acid chain; its full sequence is NAD(P)H-quinone oxidoreductase subunit 3, chloroplastic (120 aa).

Helical transmembrane passes span 9 to 29 (IFWAFLIISSVIPIFAFIISG), 60 to 80 (ICYYMFALVFVVFDVETVFLY), and 88 to 108 (ILGVSVFIEALIFVLILIVGS).

This sequence belongs to the complex I subunit 3 family. As to quaternary structure, NDH is composed of at least 16 different subunits, 5 of which are encoded in the nucleus.

The protein resides in the plastid. It is found in the chloroplast thylakoid membrane. It catalyses the reaction a plastoquinone + NADH + (n+1) H(+)(in) = a plastoquinol + NAD(+) + n H(+)(out). It carries out the reaction a plastoquinone + NADPH + (n+1) H(+)(in) = a plastoquinol + NADP(+) + n H(+)(out). Its function is as follows. NDH shuttles electrons from NAD(P)H:plastoquinone, via FMN and iron-sulfur (Fe-S) centers, to quinones in the photosynthetic chain and possibly in a chloroplast respiratory chain. The immediate electron acceptor for the enzyme in this species is believed to be plastoquinone. Couples the redox reaction to proton translocation, and thus conserves the redox energy in a proton gradient. The sequence is that of NAD(P)H-quinone oxidoreductase subunit 3, chloroplastic from Morus indica (Mulberry).